The following is a 200-amino-acid chain: BREX protein BrxB (200 aa).

It belongs to the BrxB family.

BREX systems (bacteriophage exclusion) provide immunity against bacteriophage. Part of a type 1 BREX system which protects against dsDNA phage. This system allows phage adsorption but prevents phage DNA replication, without degradation of the phage DNA. Methylation of bacterial DNA by PglX guides self/non-self discrimination. When the brxA-brxB-brxC-pglX-pglZ-brxL genes are transformed into a susceptible E.coli strain (BW25113) they confer very high resistance to infection by bacteriophage VR7 and VpaE1, about 100-fold protection against lambda, T5 and T7 and no protection against RNA phage Qbeta, ssDNA phage M13 or dSDNA phage T4 and VR5. Glycosylated phage DNA is not susceptible to BREX. The BREX system does not confer resistance to lysogenic lambda phage, i.e. prophage that are integrated into the chromosomal DNA and then induced to form phage. This Escherichia coli O9:H4 (strain HS) protein is BREX protein BrxB.